Reading from the N-terminus, the 416-residue chain is Peptide chain release factor subunit 1 (416 aa).

Belongs to the eukaryotic release factor 1 family. In terms of assembly, heterodimer of two subunits, one of which binds GTP.

The protein localises to the cytoplasm. In terms of biological role, directs the termination of nascent peptide synthesis (translation) in response to the termination codons UAA, UAG and UGA. The polypeptide is Peptide chain release factor subunit 1 (Halorubrum lacusprofundi (strain ATCC 49239 / DSM 5036 / JCM 8891 / ACAM 34)).